Consider the following 168-residue polypeptide: Myelin basic protein (168 aa).

Ala1 bears the N-acetylalanine mark. 2 positions are modified to phosphoserine: Ser7 and Ser12. Tyr14 is subject to Phosphotyrosine. Position 17 is a phosphothreonine (Thr17). Phosphoserine is present on Ser19. The residue at position 20 (Thr20) is a Phosphothreonine. Arg25 and Arg31 each carry citrulline. Thr35 is subject to Phosphothreonine. Residue Ser40 is modified to Phosphoserine. Residues 42–84 (GRFFSSDRGAPKRGSGKDHAARTTHYGSLPQKSGHRPQDENPV) are disordered. 2 positions are modified to omega-N-methylarginine: Arg43 and Arg49. The tract at residues 45–86 (FSSDRGAPKRGSGKDHAARTTHYGSLPQKSGHRPQDENPVVH) is induces experimental autoimmune encephalomyelitis (EAE). Ser56 bears the Phosphoserine mark. Thr65 bears the Phosphothreonine mark. A Phosphotyrosine modification is found at Tyr67. Ser74 carries the phosphoserine modification. Phosphothreonine occurs at positions 93 and 96. Residue Gln101 is modified to Deamidated glutamine; partial. Arg105 carries the post-translational modification Omega-N-methylarginine; alternate. Position 105 is a symmetric dimethylarginine; alternate (Arg105). A Phosphoserine modification is found at Ser113. Lys120 carries the post-translational modification N6-acetyllysine. Citrulline is present on Arg128. Gln145 carries the deamidated glutamine modification. At Arg157 the chain carries Citrulline. The residue at position 159 (Ser159) is a Phosphoserine. Ser163 is subject to Phosphoserine; by UHMK1. The residue at position 168 (Arg168) is a Citrulline.

It belongs to the myelin basic protein family. As to quaternary structure, homodimer. Post-translationally, as in other animals, several charge isomers may be produced as a result of optional post-translational modifications, such as phosphorylation of serine or threonine residues, deamidation of glutamine or asparagine residues, citrullination and methylation of arginine residues. Phosphorylated by TAOK2, VRK2, MAPK11, MAPK12, MAPK14 and MINK1. In terms of processing, proteolytically cleaved in B cell lysosomes by cathepsin CTSG which degrades the major immunogenic MBP epitope and prevents the activation of MBP-specific autoreactive T cells. In terms of tissue distribution, found in both the central and the peripheral nervous system.

Its subcellular location is the myelin membrane. Is, with PLP, the most abundant protein component of the myelin membrane in the CNS. Has a role in both the formation and stabilization of this compact multilayer arrangement of bilayers. Each splice variant and charge isomer may have a specialized function in the assembly of an optimized, biochemically functional myelin membrane. This chain is Myelin basic protein (MBP), found in Oryctolagus cuniculus (Rabbit).